The sequence spans 157 residues: MEKVSYYTEEGLQRLKGELTQLKSEGRAKVAEQLSEARDKGDLSENAEYDAAKEAQEILERRIAKLEELMINARVINKDNINTSAVSILSKVKIKNKKLGKVSTYTMVSEEEADLKEGKISIESPIGKGLLGKKAGEVAIVEAPAGKIEFEILDISF.

The segment covering glutamate 25 to leucine 43 has biased composition (basic and acidic residues). The segment at glutamate 25–alanine 47 is disordered. The stretch at leucine 43 to aspartate 79 forms a coiled coil.

It belongs to the GreA/GreB family.

Functionally, necessary for efficient RNA polymerase transcription elongation past template-encoded arresting sites. The arresting sites in DNA have the property of trapping a certain fraction of elongating RNA polymerases that pass through, resulting in locked ternary complexes. Cleavage of the nascent transcript by cleavage factors such as GreA or GreB allows the resumption of elongation from the new 3'terminus. GreA releases sequences of 2 to 3 nucleotides. The polypeptide is Transcription elongation factor GreA (Amoebophilus asiaticus (strain 5a2)).